The sequence spans 99 residues: DNA-binding protein HU (99 aa).

The interval 67–86 is disordered; sequence REGRNPKTGAKMKIDAYNQP.

This sequence belongs to the bacterial histone-like protein family. In terms of assembly, homodimer.

In terms of biological role, histone-like DNA-binding protein which is capable of wrapping DNA to stabilize it, and thus to prevent its denaturation under extreme environmental conditions. The sequence is that of DNA-binding protein HU (hup) from Rickettsia felis (strain ATCC VR-1525 / URRWXCal2) (Rickettsia azadi).